A 111-amino-acid chain; its full sequence is Disintegrin DS-AN (111 aa).

The first 20 residues, 1–20 (MIQVLLVIICLAVFPYQGSC), serve as a signal peptide directing secretion. A propeptide spanning residues 21 to 47 (IILESGNVNDYEIVYPKKLIVLPTGAM) is cleaved from the precursor. One can recognise a Disintegrin domain in the interval 47 to 111 (MNSPHPCCDP…PDCPRNPYKD (65 aa)). Cystine bridges form between C53–C76, C67–C73, C72–C97, and C85–C104. The Cell attachment site signature appears at 89–91 (RGD).

As to quaternary structure, heterodimer; disulfide-linked.

The protein resides in the secreted. Inhibits ADP-induced platelet aggregation in human platelet-rich plasma (IC(50) is 8 uM). The polypeptide is Disintegrin DS-AN (Atheris nitschei (Great lakes bush viper)).